The following is a 211-amino-acid chain: Transcriptional regulator GfcR (211 aa).

It belongs to the purine/pyrimidine phosphoribosyltransferase family. GfcR subfamily.

This chain is Transcriptional regulator GfcR, found in Methanocaldococcus jannaschii (strain ATCC 43067 / DSM 2661 / JAL-1 / JCM 10045 / NBRC 100440) (Methanococcus jannaschii).